A 798-amino-acid chain; its full sequence is Integrin beta-1 (798 aa).

The signal sequence occupies residues 1–20 (MNLQLIFWIGLISSVCCVFG). At 21 to 728 (QADENRCLKA…ETPECPTGPD (708 aa)) the chain is on the extracellular side. Residues 26 to 76 (RCLKANAKSCGECIQAGPNCGWCTNSTFLQEGMPTSARCDDLEALKKKGCH) enclose the PSI domain. 28 cysteine pairs are disulfide-bonded: Cys27/Cys45, Cys35/Cys464, Cys38/Cys64, Cys48/Cys75, Cys207/Cys213, Cys261/Cys301, Cys401/Cys415, Cys435/Cys462, Cys466/Cys486, Cys477/Cys489, Cys491/Cys500, Cys502/Cys533, Cys516/Cys531, Cys525/Cys536, Cys538/Cys553, Cys555/Cys576, Cys560/Cys574, Cys568/Cys579, Cys581/Cys590, Cys592/Cys615, Cys599/Cys613, Cys607/Cys618, Cys620/Cys630, Cys633/Cys636, Cys640/Cys691, Cys646/Cys665, Cys649/Cys661, and Cys699/Cys723. A glycan (N-linked (GlcNAc...) asparagine) is linked at Asn50. The segment covering 75–91 (CHPNDIENPRGSKDIKK) has biased composition (basic and acidic residues). Residues 75 to 105 (CHPNDIENPRGSKDIKKNKNVTNRSKGTAEK) form a disordered region. Asn94 and Asn97 each carry an N-linked (GlcNAc...) asparagine glycan. Residues 140 to 378 (DYPIDLYYLM…QLIIDAYNSL (239 aa)) enclose the VWFA domain. Positions 152 and 154 each coordinate Mg(2+). Ser154, Asp157, Asp158, and Glu189 together coordinate Ca(2+). Residues 207 to 213 (CTNEQNC) are CX3CL1-binding. A glycan (N-linked (GlcNAc...) asparagine) is linked at Asn212. Residues Asn244, Asp246, Pro248, and Glu249 each contribute to the Ca(2+) site. Position 249 (Glu249) interacts with Mg(2+). Asn269 is a glycosylation site (N-linked (GlcNAc...) asparagine). Positions 295–314 (LPNDGQCHLENDVYTMSHYY) are CX3CL1-binding. Ala362 is a Ca(2+) binding site. Asn363, Asn406, and Asn417 each carry an N-linked (GlcNAc...) asparagine glycan. The interval 383 to 465 (ILENSKLPEG…IILQFICECE (83 aa)) is interaction with TMEM182. 4 consecutive I-EGF domains span residues 466–501 (CQGE…RHCE), 502–554 (CSTD…KFCE), 555–591 (CDNF…SACD), and 592–631 (CSLD…PTCE). N-linked (GlcNAc...) asparagine glycosylation occurs at Asn481. A glycan (N-linked (GlcNAc...) asparagine) is linked at Asn520. Asn584 is a glycosylation site (N-linked (GlcNAc...) asparagine). Asn669 is a glycosylation site (N-linked (GlcNAc...) asparagine). A helical transmembrane segment spans residues 729–749 (IIPIVAGVVAGIVLIGLALLL). The Cytoplasmic segment spans residues 750-798 (IWKLLMIIHDRREFAKFEKEKMNAKWDTGENPIYKSAVTTVVNPKYEGK). The segment at 762 to 767 (EFAKFE) is signal for sorting from recycling endosomes; interaction with ACAP1. Thr777 is subject to Phosphothreonine. Tyr783 carries the post-translational modification Phosphotyrosine. Ser785 carries the phosphoserine modification. The interaction with ITGB1BP1 stretch occupies residues 785 to 792 (SAVTTVVN). Thr789 is modified (phosphothreonine). An N6-acetyllysine; alternate modification is found at Lys794. A Glycyl lysine isopeptide (Lys-Gly) (interchain with G-Cter in SUMO1); alternate cross-link involves residue Lys794.

Belongs to the integrin beta chain family. In terms of assembly, interacts with seprase FAP (seprase); the interaction occurs at the cell surface of invadopodia membrane in a collagen-dependent manner. Heterodimer of an alpha and a beta subunit. Beta-1 associates with either alpha-1, alpha-2, alpha-3, alpha-4, alpha-5, alpha-6, alpha-7, alpha-8, alpha-9, alpha-10, alpha-11 or alpha-V. ITGA6:ITGB1 is found in a complex with CD9; interaction takes place in oocytes and is involved in sperm-egg fusion. Binds LGALS3BP and NMRK2, when associated with alpha-7, but not with alpha-5. Interacts with FLNB, FLNC and RANBP9. Interacts with KRT1 in the presence of RACK1 and SRC. Interacts with JAML; integrin alpha-4/beta-1 may regulate leukocyte to endothelial cells adhesion by controlling JAML homodimerization. Interacts with RAB21. Interacts (via the cytoplasmic region) with RAB25 (via the hypervariable C-terminal region). Interacts with MYO10. Interacts with ITGB1BP1 (via C-terminal region); the interaction is a prerequisite for focal adhesion disassembly. Interacts with TLN1; the interaction is prevented by competitive binding of ITGB1BP1. Interacts with ACAP1; required for ITGB1 recycling. Interacts with ASAP3. Interacts with FERMT2; the interaction is inhibited in presence of ITGB1BP1. Interacts with DAB2. Interacts with FGR and HCK. Interacts with EMP2; the interaction may be direct or indirect and ITGB1 has a heterodimer form. ITGA5:ITGB1 interacts with CCN3. ITGA4:ITGB1 is found in a ternary complex with CX3CR1 and CX3CL1. ITGA5:ITGB1 interacts with FBN1. ITGA5:ITGB1 interacts with IL1B. Interacts with MDK. ITGA4:ITGB1 interacts with MDK; this interaction mediates MDK-induced osteoblast cells migration through PXN phosphorylation. ITGA6:ITGB1 interacts with MDK; this interaction mediates MDK-induced neurite-outgrowth. ITGA5:ITGB1 interacts with ACE2. Interacts with TMEM182 and LAMB1. Interacts with tensin TNS3; TNS3 also interacts with PEAK1, thus acting as an adapter molecule to bridge the association of PEAK1 with ITGB1. Interacts with tensin TNS4; the interaction displaces tensin TNS3 from the ITGB1 cytoplasmic tail and promotes ITGB1 stability. Integrin ITGA9:ITGB1 interacts with SPP1/OPN (via N-terminus). Integrin ITGA9:ITGB1 interacts with TNC/TNFN3 (via the 3rd Fibronectin type-III domain). Integrins ITGA4:ITGB1 and ITGA9:ITGB1 interact with SVEP1 (via Sushi domain 21); thereby inhibit Ca(2+) intracellular signaling and as a result repress vasocontraction. ITGA4:ITGB1 and ITGA5:ITGB1 interacts with SELP. Interacts with CD248. ITGA5:ITGB1 interacts with IGFBP1. ITGA4:ITGB1 interacts with BCAM. Interacts with ADGRG6. Interacts with the C-terminal region of FLNC. Interacts with filamin FLNA isoform 3/VAR-1. As to quaternary structure, interacts with ACE2. Interacts with alpha-7B in cardiomyocytes of adult heart and alpha-7A and alpha-7B in adult skeletal muscle. Interacts with filamin FLNA isoform 3/VAR-1.

The protein resides in the cell membrane. Its subcellular location is the cell projection. It is found in the invadopodium membrane. The protein localises to the ruffle membrane. It localises to the recycling endosome. The protein resides in the melanosome. Its subcellular location is the lamellipodium. It is found in the ruffle. The protein localises to the cell junction. It localises to the focal adhesion. The protein resides in the sarcolemma. In terms of biological role, integrins alpha-1/beta-1, alpha-2/beta-1, alpha-10/beta-1 and alpha-11/beta-1 are receptors for collagen. Integrins alpha-1/beta-1 and alpha-2/beta-2 recognize the proline-hydroxylated sequence G-F-P-G-E-R in collagen. Integrins alpha-2/beta-1, alpha-3/beta-1, alpha-4/beta-1, alpha-5/beta-1, alpha-8/beta-1, alpha-10/beta-1, alpha-11/beta-1 and alpha-V/beta-1 are receptors for fibronectin. Alpha-4/beta-1 recognizes one or more domains within the alternatively spliced CS-1 and CS-5 regions of fibronectin. Integrin alpha-5/beta-1 is a receptor for fibrinogen. Integrin alpha-1/beta-1, alpha-2/beta-1, alpha-6/beta-1 and alpha-7/beta-1 are receptors for lamimin. Integrin alpha-6/beta-1 (ITGA6:ITGB1) is present in oocytes and is involved in sperm-egg fusion. Integrin alpha-4/beta-1 is a receptor for VCAM1 and recognizes the sequence Q-I-D-S in VCAM1. Integrin alpha-9/beta-1 is a receptor for VCAM1, cytotactin and osteopontin. It recognizes the sequence A-E-I-D-G-I-E-L in cytotactin. Integrin alpha-3/beta-1 is a receptor for epiligrin, thrombospondin and CSPG4. Integrin alpha-3/beta-1 provides a docking site for FAP (seprase) at invadopodia plasma membranes in a collagen-dependent manner and hence may participate in the adhesion, formation of invadopodia and matrix degradation processes, promoting cell invasion. Alpha-3/beta-1 may mediate with LGALS3 the stimulation by CSPG4 of endothelial cells migration. Integrin alpha-V/beta-1 is a receptor for vitronectin. Beta-1 integrins recognize the sequence R-G-D in a wide array of ligands. When associated with alpha-7/beta-1 integrin, regulates cell adhesion and laminin matrix deposition. Involved in promoting endothelial cell motility and angiogenesis. Involved in osteoblast compaction through the fibronectin fibrillogenesis cell-mediated matrix assembly process and the formation of mineralized bone nodules. May be involved in up-regulation of the activity of kinases such as PKC via binding to KRT1. Together with KRT1 and RACK1, serves as a platform for SRC activation or inactivation. Plays a mechanistic adhesive role during telophase, required for the successful completion of cytokinesis. ITGA4:ITGB1 binds to fractalkine (CX3CL1) and may act as its coreceptor in CX3CR1-dependent fractalkine signaling. ITGA4:ITGB1 and ITGA5:ITGB1 bind to PLA2G2A via a site (site 2) which is distinct from the classical ligand-binding site (site 1) and this induces integrin conformational changes and enhanced ligand binding to site 1. ITGA5:ITGB1 acts as a receptor for fibrillin-1 (FBN1) and mediates R-G-D-dependent cell adhesion to FBN1. ITGA5:ITGB1 acts as a receptor for fibronectin FN1 and mediates R-G-D-dependent cell adhesion to FN1. ITGA5:ITGB1 is a receptor for IL1B and binding is essential for IL1B signaling. ITGA5:ITGB3 is a receptor for soluble CD40LG and is required for CD40/CD40LG signaling. Plays an important role in myoblast differentiation and fusion during skeletal myogenesis. ITGA9:ITGB1 may play a crucial role in SVEP1/polydom-mediated myoblast cell adhesion. Integrins ITGA9:ITGB1 and ITGA4:ITGB1 repress PRKCA-mediated L-type voltage-gated channel Ca(2+) influx and ROCK-mediated calcium sensitivity in vascular smooth muscle cells via their interaction with SVEP1, thereby inhibit vasocontraction. In Bos taurus (Bovine), this protein is Integrin beta-1 (ITGB1).